The primary structure comprises 117 residues: Ribosome-binding factor A (117 aa).

This sequence belongs to the RbfA family. Monomer. Binds 30S ribosomal subunits, but not 50S ribosomal subunits or 70S ribosomes.

The protein resides in the cytoplasm. One of several proteins that assist in the late maturation steps of the functional core of the 30S ribosomal subunit. Associates with free 30S ribosomal subunits (but not with 30S subunits that are part of 70S ribosomes or polysomes). Required for efficient processing of 16S rRNA. May interact with the 5'-terminal helix region of 16S rRNA. The chain is Ribosome-binding factor A from Anaplasma marginale (strain St. Maries).